We begin with the raw amino-acid sequence, 346 residues long: Annexin A1 (346 aa).

N-acetylalanine is present on Ala2. Position 5 is a phosphoserine; by TRPM7 (Ser5). Gln19 is covalently cross-linked (Isoglutamyl lysine isopeptide (Gln-Lys) (interchain with K-?)). Tyr21 is modified (phosphotyrosine; by EGFR). A Phosphoserine; by PKC modification is found at Ser27. Residues Ser34 and Ser37 each carry the phosphoserine modification. Phosphothreonine is present on Thr41. Annexin repeat units follow at residues 42-113 (FNPS…ALLK), 114-185 (TPAQ…SLAK), 197-269 (DLAD…AIVK), and 273-344 (SKPA…ALCG). The residue at position 58 (Lys58) is an N6-acetyllysine. The Ca(2+) site is built by Gly59, Val60, Glu62, Lys97, Leu100, Glu105, Met127, Gly129, Gly131, Thr132, and Glu134. At Thr136 the chain carries Phosphothreonine. Residues Asp171, Gly210, and Arg213 each contribute to the Ca(2+) site. Lys214 participates in a covalent cross-link: Glycyl lysine isopeptide (Lys-Gly) (interchain with G-Cter in SUMO1); alternate. A Glycyl lysine isopeptide (Lys-Gly) (interchain with G-Cter in SUMO2); alternate cross-link involves residue Lys214. A Ca(2+)-binding site is contributed by Gly215. At Lys239 the chain carries N6-acetyllysine. Asp253, Glu255, and Leu256 together coordinate Ca(2+). Residue Lys257 forms a Glycyl lysine isopeptide (Lys-Gly) (interchain with G-Cter in SUMO1) linkage. The Ca(2+) site is built by Glu261, Met286, Gly288, and Gly290. An N6-acetyllysine modification is found at Lys312. Cys324 and Cys343 are disulfide-bonded. Leu328, Glu330, and Thr331 together coordinate Ca(2+). Lys332 is covalently cross-linked (Glycyl lysine isopeptide (Lys-Gly) (interchain with G-Cter in SUMO1)). Position 336 (Glu336) interacts with Ca(2+).

It belongs to the annexin family. In terms of assembly, homodimer; non-covalently linked. Homodimer; linked by transglutamylation. Homodimers linked by transglutamylation are observed in placenta, but not in other tissues. Interacts with S100A11. Heterotetramer, formed by two molecules each of S100A11 and ANXA1. Interacts with DYSF. Interacts with EGFR. In terms of processing, phosphorylated by protein kinase C, EGFR and TRPM7. Phosphorylated in response to EGF treatment. Sumoylated. Post-translationally, proteolytically cleaved by cathepsin CTSG to release the active N-terminal peptide Ac2-26.

It is found in the nucleus. The protein resides in the cytoplasm. It localises to the cell projection. Its subcellular location is the cilium. The protein localises to the basolateral cell membrane. It is found in the lateral cell membrane. The protein resides in the cell membrane. It localises to the apical cell membrane. Its subcellular location is the membrane. The protein localises to the early endosome. It is found in the cytoplasmic vesicle membrane. The protein resides in the endosome membrane. It localises to the secreted. Its subcellular location is the extracellular space. The protein localises to the extracellular exosome. It is found in the cytoplasmic vesicle. The protein resides in the secretory vesicle lumen. It localises to the phagocytic cup. Its function is as follows. Plays important roles in the innate immune response as effector of glucocorticoid-mediated responses and regulator of the inflammatory process. Has anti-inflammatory activity. Plays a role in glucocorticoid-mediated down-regulation of the early phase of the inflammatory response. Contributes to the adaptive immune response by enhancing signaling cascades that are triggered by T-cell activation, regulates differentiation and proliferation of activated T-cells. Promotes the differentiation of T-cells into Th1 cells and negatively regulates differentiation into Th2 cells. Has no effect on unstimulated T-cells. Negatively regulates hormone exocytosis via activation of the formyl peptide receptors and reorganization of the actin cytoskeleton. Has high affinity for Ca(2+) and can bind up to eight Ca(2+) ions. Displays Ca(2+)-dependent binding to phospholipid membranes. Plays a role in the formation of phagocytic cups and phagosomes. Plays a role in phagocytosis by mediating the Ca(2+)-dependent interaction between phagosomes and the actin cytoskeleton. Functionally, functions at least in part by activating the formyl peptide receptors and downstream signaling cascades. Promotes chemotaxis of granulocytes and monocytes via activation of the formyl peptide receptors. Promotes rearrangement of the actin cytoskeleton, cell polarization and cell migration. Promotes resolution of inflammation and wound healing. Acts via neutrophil N-formyl peptide receptors to enhance the release of CXCL2. The protein is Annexin A1 (ANXA1) of Pan troglodytes (Chimpanzee).